Reading from the N-terminus, the 200-residue chain is Lipopolysaccharide core heptose(II)-phosphate phosphatase (200 aa).

The N-terminal stretch at 1 to 25 (MLAFCRSSLKSKKYFIILLALAAIA) is a signal peptide.

The protein belongs to the phosphoglycerate mutase family. Ais subfamily.

The protein resides in the periplasm. The protein operates within bacterial outer membrane biogenesis; lipopolysaccharide metabolism. Catalyzes the dephosphorylation of heptose(II) of the outer membrane lipopolysaccharide core. The sequence is that of Lipopolysaccharide core heptose(II)-phosphate phosphatase from Escherichia coli O6:H1 (strain CFT073 / ATCC 700928 / UPEC).